Reading from the N-terminus, the 395-residue chain is Multidrug resistance protein MdtL (395 aa).

Helical transmembrane passes span 4 to 24 (FLLC…MYLV), 42 to 62 (IAFS…GKIA), 69 to 89 (PVAI…SRAS), 93 to 113 (LFLS…VVAF), 131 to 151 (LLNG…HLIM), 158 to 178 (SLFY…LFIL), 217 to 237 (VSVI…VMGF), 247 to 267 (ALTA…LGLF), 271 to 291 (TLML…SLAH), 295 to 315 (VTLF…GVAM), 333 to 353 (LGIA…ILGI), and 358 to 378 (MLIG…FSVA).

The protein belongs to the major facilitator superfamily. DHA1 family. MdtL (TC 2.A.1.2.22) subfamily.

It localises to the cell inner membrane. The sequence is that of Multidrug resistance protein MdtL from Salmonella agona (strain SL483).